We begin with the raw amino-acid sequence, 419 residues long: Sphingomyelin phosphodiesterase 2 (419 aa).

Residue Glu-49 coordinates Mg(2+). The active-site Proton acceptor is His-272. Helical transmembrane passes span 326–346 (FSGY…VLAA) and 354–374 (AIIL…VYLF).

This sequence belongs to the neutral sphingomyelinase family. It depends on Mg(2+) as a cofactor. Although widely expressed in all tissues examined, except the spleen, high enzymatic activity occurs only in the brain.

It localises to the cell membrane. It catalyses the reaction a sphingomyelin + H2O = phosphocholine + an N-acylsphing-4-enine + H(+). It carries out the reaction an N-(acyl)-sphingosylphosphocholine + H2O = an N-acyl-sphingoid base + phosphocholine + H(+). The enzyme catalyses 1-O-octadecyl-sn-glycero-3-phosphocholine + H2O = 1-O-octadecyl-sn-glycerol + phosphocholine + H(+). The catalysed reaction is 1-hexadecanoyl-sn-glycero-3-phosphocholine + H2O = 1-hexadecanoyl-sn-glycerol + phosphocholine + H(+). It catalyses the reaction a sphingosylphosphocholine + H2O = a sphingoid base + phosphocholine + H(+). It carries out the reaction 1-O-hexadecyl-sn-glycero-3-phosphocholine + H2O = 1-O-hexadecyl-sn-glycerol + phosphocholine + H(+). It participates in lipid metabolism; sphingolipid metabolism. Activated by arachidonic acid. Catalyzes, at least in vitro, the hydrolysis of sphingomyelin to form ceramide and phosphocholine. Also hydrolyzes 1-O-alkyl-2-lyso-sn-glycero-3-phosphocholine (lyso-platelet-activating factor) in vivo. Also acts on 1-acyl-2-lyso-sn-glycero-3-phosphocholine (lyso-PC) and sphingosylphosphocholine. The sequence is that of Sphingomyelin phosphodiesterase 2 from Mus musculus (Mouse).